The following is a 280-amino-acid chain: MDVLKSLPVTDNHIHVDDKHGYGAEKVAKTFYNAGGKVMIVLNKPTFDGNLTASMDILVRDVEIINKNTPVKAFGLVGVHPAELTYLMKFMSLEEAKQRIVDALNYAKKLVEEYDFIVGIGEVGRPHYPVSEDVWKASNEILKYCMELAKDIGCAIQIHAESSTEEQFKEFSEMAKEVGLNPEKVVKHHCGNMVLEGERYGIFPSILASRVNEDVVKKSLRFVMETDYIDDLKRPGVALGIKTVPRVTRRLIEKGVLDEEGVYKIHKENIERIYDMDLEL.

The protein belongs to the metallo-dependent hydrolases superfamily.

This is an uncharacterized protein from Methanocaldococcus jannaschii (strain ATCC 43067 / DSM 2661 / JAL-1 / JCM 10045 / NBRC 100440) (Methanococcus jannaschii).